We begin with the raw amino-acid sequence, 228 residues long: MCGAIVLLLLVGTSPAPVEGLRCRTGEGPSADDVKRIVRTCMNKITNAGTMGEWGQRDRNGEEQQMMRDYGRSHRRRKRQYYGGQTSGSSSSGSAGEHSYNGRASPQYGEAGQGGNGTRSGGNSSSSSSSTIERDRACLMQCFFEEMKATNADGFPEKHKVLHVITKDIREHELREFYVDSIQECFHMLGLDNRLKDKCDYSMRFVTCLSDRFETNCDDWESVTSAMF.

The signal sequence occupies residues 1–20; sequence MCGAIVLLLLVGTSPAPVEG. Residues 50–131 form a disordered region; sequence TMGEWGQRDR…GNSSSSSSST (82 aa). Basic and acidic residues predominate over residues 55-72; it reads GQRDRNGEEQQMMRDYGR. The span at 83 to 99 shows a compositional bias: low complexity; sequence GGQTSGSSSSGSAGEHS. Positions 111–120 are enriched in gly residues; sequence AGQGGNGTRS. Low complexity predominate over residues 121–131; the sequence is GGNSSSSSSST. 2 disulfides stabilise this stretch: cysteine 138-cysteine 199 and cysteine 185-cysteine 208.

It belongs to the PBP/GOBP family.

Its subcellular location is the secreted. Present in the aqueous fluid surrounding olfactory sensory dendrites and are thought to aid in the capture and transport of hydrophobic odorants into and through this fluid. The protein is General odorant-binding protein 71 (Obp71) of Anopheles gambiae (African malaria mosquito).